The sequence spans 157 residues: Transcription factor HES-2 (157 aa).

Positions 13-70 (LRKSLKPLLEKRRRARINESLSQLKGLVLPLLGAETSRYSKLEKADILEMTVRFLREQ) constitute a bHLH domain. In terms of domain architecture, Orange spans 86–119 (YLEGYRACLARLARVLPACSVLEPAVSARLLEHL). A disordered region spans residues 124-157 (VSGGPPSLTPASASAPAPSPPVPPPSSLGLWRPW). The span at 125 to 139 (SGGPPSLTPASASAP) shows a compositional bias: low complexity. The segment covering 140–149 (APSPPVPPPS) has biased composition (pro residues). The WRPW motif motif lies at 154–157 (WRPW).

As to quaternary structure, transcription repression requires formation of a complex with a corepressor protein of the Groucho/TLE family.

It is found in the nucleus. Its function is as follows. Transcriptional repressor of genes that require a bHLH protein for their transcription. The polypeptide is Transcription factor HES-2 (Hes2) (Rattus norvegicus (Rat)).